We begin with the raw amino-acid sequence, 204 residues long: Recombination protein RecR (204 aa).

The C4-type zinc finger occupies 57–72 (CPTCFNYTDTDICRYC). The region spanning 80 to 181 (ESICVVEEPS…KLSRIAHGVP (102 aa)) is the Toprim domain.

Belongs to the RecR family.

Functionally, may play a role in DNA repair. It seems to be involved in an RecBC-independent recombinational process of DNA repair. It may act with RecF and RecO. The polypeptide is Recombination protein RecR (Bdellovibrio bacteriovorus (strain ATCC 15356 / DSM 50701 / NCIMB 9529 / HD100)).